A 170-amino-acid chain; its full sequence is MKTQRHGPSLGRWSLVLLLLGLVMPLAIVAQVLSYQEAVLRAIDGINQRSSDANLYRLLDLDPRPTMDGDPDTPKPVSFTVKETVCPRTTQKSPQDCDFKEDGLVKRCVGTVTLNQARDSFDISCDKDNRRFARLGNFFRKAKKKIGRGLKKIGQKIKDFLGNLVPRTES.

Positions 1–30 are cleaved as a signal peptide; it reads MKTQRHGPSLGRWSLVLLLLGLVMPLAIVA. The propeptide at 31–131 is cathelin-like domain (CLD); that stretch reads QVLSYQEAVL…DISCDKDNRR (101 aa). Cystine bridges form between cysteine 86-cysteine 97 and cysteine 108-cysteine 125. Residues 150–162 form an active core region; sequence LKKIGQKIKDFLG.

It belongs to the cathelicidin family. Monomer, homodimer or homotrimer (in vitro). Oligomerizes as tetra- or hexamer in solution (in vitro). Proteolytically cleaved by proteinase PRTN3 into antibacterial peptide LL-37. Proteolytically cleaved by cathepsin CTSG and neutrophil elastase ELANE. Post-translationally, resistant to proteolytic degradation in solution, and when bound to both zwitterionic (mimicking mammalian membranes) and negatively charged membranes (mimicking bacterial membranes). In terms of processing, after secretion onto the skin surface, the CAMP gene product is processed by a serine protease-dependent mechanism into multiple novel antimicrobial peptides distinct from and shorter than cathelicidin LL-37. These peptides show enhanced antimicrobial action, acquiring the ability to kill skin pathogens such as S.aureus, E.coli and C.albicans. These peptides have lost the ability to stimulate CXCL8/IL8 release from keratinocytes. The peptides act synergistically, killing bacteria at lower concentrations when present together, and maintain activity at increased salt condition.

It localises to the secreted. It is found in the vesicle. Antimicrobial protein that is an integral component of the innate immune system. Binds to bacterial lipopolysaccharides (LPS). Acts via neutrophil N-formyl peptide receptors to enhance the release of CXCL2. Postsecretory processing generates multiple cathelicidin antimicrobial peptides with various lengths which act as a topical antimicrobial defense in sweat on skin. The unprocessed precursor form, cathelicidin antimicrobial peptide, inhibits the growth of Gram-negative E.coli and E.aerogenes with efficiencies comparable to that of the mature peptide LL-37 (in vitro). In terms of biological role, antimicrobial peptide that is an integral component of the innate immune system. Binds to bacterial lipopolysaccharides (LPS). Causes membrane permeabilization by forming transmembrane pores (in vitro). Causes lysis of E.coli. Exhibits antimicrobial activity against Gram-negative bacteria such as P.aeruginosa, S.typhimurium, E.aerogenes, E.coli and P.syringae, Gram-positive bacteria such as L.monocytogenes, S.epidermidis, S.pyogenes and S.aureus, as well as vancomycin-resistant enterococci (in vitro). Exhibits antimicrobial activity against methicillin-resistant S.aureus, P.mirabilis, and C.albicans in low-salt media, but not in media containing 100 mM NaCl (in vitro). Forms chiral supramolecular assemblies with quinolone signal (PQS) molecules of P.aeruginosa, which may lead to interference of bacterial quorum signaling and perturbance of bacterial biofilm formation. May form supramolecular fiber-like assemblies on bacterial membranes. Induces cytokine and chemokine producation as well as TNF/TNFA and CSF2/GMCSF production in normal human keratinocytes. Exhibits hemolytic activity against red blood cells. Functionally, exhibits antimicrobial activity against E.coli and B.megaterium (in vitro). This is Cathelicidin antimicrobial peptide from Trachypithecus obscurus (Dusky leaf-monkey).